Reading from the N-terminus, the 66-residue chain is Potassium channel toxin alpha-KTx 30.1 (66 aa).

An N-terminal signal peptide occupies residues M1–A24. Disulfide bonds link C30–C50, C36–C55, and C40–C57.

This sequence belongs to the short scorpion toxin superfamily. Potassium channel inhibitor family. Alpha-KTx 30 subfamily. In terms of tissue distribution, expressed by the venom gland.

The protein localises to the secreted. In terms of biological role, inhibits Kv1.3/KCNA3 channel (1 uM of the toxin inhibits currents by 64.1%). This chain is Potassium channel toxin alpha-KTx 30.1, found in Scorpiops margerisonae (Scorpion).